The chain runs to 212 residues: Ribonuclease HII (212 aa).

Residues 1–205 (MTICGVDEAG…VQDILDRASQ (205 aa)) enclose the RNase H type-2 domain. 3 residues coordinate a divalent metal cation: Asp-7, Glu-8, and Asp-100.

Belongs to the RNase HII family. Requires Mn(2+) as cofactor. Mg(2+) is required as a cofactor.

The protein resides in the cytoplasm. The catalysed reaction is Endonucleolytic cleavage to 5'-phosphomonoester.. Its function is as follows. Endonuclease that specifically degrades the RNA of RNA-DNA hybrids. This Methanocorpusculum labreanum (strain ATCC 43576 / DSM 4855 / Z) protein is Ribonuclease HII.